A 283-amino-acid polypeptide reads, in one-letter code: MGEHNLFNPGFVGQLVNINARDAFYLSNFRASGGQLAGLQTLRLSRRDNVCSLPWNPSEACSGYPQSHISGPVTLNHTYNQSCDITRQEDNKCFYSDSACATSGGGDNNSTNLISKEGALDNSSVSITAENGQNNLNGMDNGGSYSKYDCLTPAEQPIPNPRLCRSLESVSGCSFINEGAKTSSGITHSLTSPDIQTSVAALNGGALWYPMHRQTRKKRKPYSKLQLNELEGEFILNEFITRQRRRELSDRLNLTDQQVKIWFQNRRMKKKRLLMREQALSYF.

The homeobox DNA-binding region spans 215-274; it reads TRKKRKPYSKLQLNELEGEFILNEFITRQRRRELSDRLNLTDQQVKIWFQNRRMKKKRLL.

The protein belongs to the Abd-B homeobox family.

It is found in the nucleus. Sequence-specific transcription factor which is part of a developmental regulatory system that provides cells with specific positional identities on the anterior-posterior axis. The sequence is that of Homeobox protein Hox-C12b (hoxc12b) from Danio rerio (Zebrafish).